The following is a 132-amino-acid chain: Small ribosomal subunit protein uS9 (132 aa).

The segment at 100 to 132 (LKSNGLLTRDDRTKERKKPGLKRARKAPQYTKR) is disordered. Basic residues predominate over residues 114–132 (ERKKPGLKRARKAPQYTKR).

The protein belongs to the universal ribosomal protein uS9 family.

This Dehalococcoides mccartyi (strain ATCC BAA-2100 / JCM 16839 / KCTC 5957 / BAV1) protein is Small ribosomal subunit protein uS9.